The following is a 227-amino-acid chain: Enolase-phosphatase E1 (227 aa).

2 residues coordinate Mg(2+): aspartate 11 and glutamate 13. Residues serine 118 to serine 119 and lysine 161 contribute to the substrate site. Aspartate 186 serves as a coordination point for Mg(2+).

The protein belongs to the HAD-like hydrolase superfamily. MasA/MtnC family. Monomer. Requires Mg(2+) as cofactor.

The protein resides in the cytoplasm. It localises to the nucleus. It carries out the reaction 5-methylsulfanyl-2,3-dioxopentyl phosphate + H2O = 1,2-dihydroxy-5-(methylsulfanyl)pent-1-en-3-one + phosphate. Its pathway is amino-acid biosynthesis; L-methionine biosynthesis via salvage pathway; L-methionine from S-methyl-5-thio-alpha-D-ribose 1-phosphate: step 3/6. The protein operates within amino-acid biosynthesis; L-methionine biosynthesis via salvage pathway; L-methionine from S-methyl-5-thio-alpha-D-ribose 1-phosphate: step 4/6. In terms of biological role, bifunctional enzyme that catalyzes the enolization of 2,3-diketo-5-methylthiopentyl-1-phosphate (DK-MTP-1-P) into the intermediate 2-hydroxy-3-keto-5-methylthiopentenyl-1-phosphate (HK-MTPenyl-1-P), which is then dephosphorylated to form the acireductone 1,2-dihydroxy-3-keto-5-methylthiopentene (DHK-MTPene). This chain is Enolase-phosphatase E1, found in Saccharomyces cerevisiae (strain JAY291) (Baker's yeast).